A 146-amino-acid polypeptide reads, in one-letter code: Mu-like prophage FluMu G protein 1 (146 aa).

This sequence to phage Mu protein G.

This Haemophilus influenzae (strain ATCC 51907 / DSM 11121 / KW20 / Rd) protein is Mu-like prophage FluMu G protein 1.